We begin with the raw amino-acid sequence, 292 residues long: MNGIINLKKEAGMTSHDAVFKLRKILGTKKIGHGGTLDPDVVGVLPIAVGKATRMVEFMQDEGKVYEGEITLGYSTTTEDASGEVVAETPVLSPLDEKLVDEAIASLTGPITQIPPMYSAVKVNGRKLYEYARAGQEVKRPERQVTIYQFERTSPISYEGQLARFTFRVKCSKGTYIRTLSVDLGEKLGYAAHMSHLTRTSAAGMRLGDALTLEQIAERVAEEDYSFLQPLELGIGDLLKVELSDEQVEDVRNGRFISLVSDEAELAGFYGEKLVTILEKRKDQFKPRKVFL.

Residue aspartate 38 is the Nucleophile of the active site.

It belongs to the pseudouridine synthase TruB family. Type 1 subfamily.

The catalysed reaction is uridine(55) in tRNA = pseudouridine(55) in tRNA. Functionally, responsible for synthesis of pseudouridine from uracil-55 in the psi GC loop of transfer RNAs. This is tRNA pseudouridine synthase B from Streptococcus gordonii (strain Challis / ATCC 35105 / BCRC 15272 / CH1 / DL1 / V288).